The following is a 70-amino-acid chain: Small ribosomal subunit protein bS21B (70 aa).

The protein belongs to the bacterial ribosomal protein bS21 family.

In Paraburkholderia xenovorans (strain LB400), this protein is Small ribosomal subunit protein bS21B.